Reading from the N-terminus, the 153-residue chain is MAENYAGLTQLGQTVSQPASPDQAVLEKVPNPTPGKAYMIRFTAPEFTSLCPLTGQPDFAHIVLDYVPRDWIVESKSLKLFLTSFRNVGSFHEACSMKIAERVVSLLDPVWLRIGAYWYPRGGIPIDVFWQTGSPPDGVWIPAQDVPGYRGRG.

Cysteine 51 (thioimide intermediate) is an active-site residue. Residue aspartate 58 is the Proton donor of the active site. Substrate is bound by residues 73–75 and 92–93; these read VES and HE.

This sequence belongs to the GTP cyclohydrolase I family. QueF type 1 subfamily.

The protein localises to the cytoplasm. The enzyme catalyses 7-aminomethyl-7-carbaguanine + 2 NADP(+) = 7-cyano-7-deazaguanine + 2 NADPH + 3 H(+). The protein operates within tRNA modification; tRNA-queuosine biosynthesis. In terms of biological role, catalyzes the NADPH-dependent reduction of 7-cyano-7-deazaguanine (preQ0) to 7-aminomethyl-7-deazaguanine (preQ1). The polypeptide is NADPH-dependent 7-cyano-7-deazaguanine reductase (Granulibacter bethesdensis (strain ATCC BAA-1260 / CGDNIH1)).